The chain runs to 727 residues: Two-component response regulator-like APRR7 (727 aa).

Residues 1 to 47 (MNANEEGEGSRYPITDRKTGETKFDRVESRTEKHSEEEKTNGITMDV) form a disordered region. Residues 14–40 (ITDRKTGETKFDRVESRTEKHSEEEKT) are compositionally biased toward basic and acidic residues. The Response regulatory domain occupies 79–197 (RVLLVENDDC…ELKILWQHVW (119 aa)). Disordered regions lie at residues 203–265 (SSGS…KKAV), 291–312 (NPEF…QEHD), 339–416 (KDEP…KTLD), 464–487 (SRYN…SLQD), 509–560 (ESLP…QPLP), and 606–670 (VNGS…SQRE). The segment covering 246-259 (ASDGSSDGSGAQSS) has biased composition (low complexity). Composition is skewed to polar residues over residues 344–353 (SKTTGIMRQD), 467–487 (NPAS…SLQD), and 519–535 (VGSN…NNAF). The segment covering 538-555 (PGAPKVSSAGSSSVKHSS) has biased composition (low complexity). The segment covering 641-657 (GKNGNGDGSGSGSGSGS) has biased composition (gly residues). The 43-residue stretch at 669–711 (REAALTKFRQKRKERCFRKKVRYQSRKKLAEQRPRVRGQFVRK) folds into the CCT domain.

The protein belongs to the ARR-like family. Post-translationally, phosphorylated. Phosphorylation varies throughout the diurnal cycle.

It localises to the nucleus. Functionally, transcriptional repressor of CCA1 and LHY, and positive regulator of LWD1 and LWD2 expression. Represses the expression of other clock proteins and master regulators of plant growth, development and response to abiotic stress. Involved in the positive and negative feedback loops of the circadian clock. Controls photoperiodic flowering response and temperature compensation. Expression of several members of the ARR-like family is controlled by circadian rhythm. APRR9, APRR7, and APRR5 coordinately act on the upstream region of the target genes to repress their expression from noon until midnight. The particular coordinated sequential expression of APRR9, APRR7, APRR5, APRR3 and APPR1 result to circadian waves that may be at the basis of the endogenous circadian clock. This chain is Two-component response regulator-like APRR7 (APRR7), found in Arabidopsis thaliana (Mouse-ear cress).